The following is a 219-amino-acid chain: MTESHIDFRRAKFLISAPDIAHLDQYLPGDVGVEIAFAGRSNAGKSSALNALTEQKSLARTSKTPGRTQLINVFELDSQRRLVDLPGYGFAQVPLAMKNKWQQALGEYLQKRACLSGVVVLMDIRHPLKDLDMQMIEWAVASEIPVLALLTKSDKLAQSAKMKTVNEVRKALADFGDWVLVEPFSALKGTGKPKVLSILNEWCHPQWLRDELDTAEQSN.

Residues 31–205 (VGVEIAFAGR…LSILNEWCHP (175 aa)) enclose the EngB-type G domain. GTP is bound by residues 39 to 46 (GRSNAGKS), 66 to 70 (GRTQL), 84 to 87 (DLPG), 151 to 154 (TKSD), and 184 to 186 (FSA). The Mg(2+) site is built by Ser46 and Thr68.

It belongs to the TRAFAC class TrmE-Era-EngA-EngB-Septin-like GTPase superfamily. EngB GTPase family. Mg(2+) is required as a cofactor.

Its function is as follows. Necessary for normal cell division and for the maintenance of normal septation. The polypeptide is Probable GTP-binding protein EngB (Shewanella putrefaciens (strain CN-32 / ATCC BAA-453)).